Consider the following 1394-residue polypeptide: MEEIPIKVAVRIRPLLCKEVLHNHQVCVRDIPKTQQIIIGRDRVFTFDFVFGKNSTQDEVYSTCIKPLVLSLIEGYNATVFAYGQTGSGKTYTIGGGHVASVVDGQKGIIPRAIQEIFQSISGNPNIDFKIKVSYIEVYKEDLRDLLELETSMKDLHIREDEKGNTVIVGAKECQVDSVEDVMGLLQVGNAARHTGTTQMNEHSSRSHAIFTISVCQVGKSAEATEDGEWCSHRHIVSKFHFVDLAGSERVTKTGNTGERFKESIQINSGLLALGNVISALGDPRRKSSHVPYRDAKITRLLKDSLGGSAKTVMITCVSPSSSDFDESLNSLKYANRARNIRNKPTLNFSPQADRMDEMEFEIKLLREALQSHQASISQTSQTASENVPDQNRIHSLEEQIAQLQEECLGYQDCIEQAFAFLVDLKDAVRLNQKQQHKLQQWFSRTQEVRKAVLTPLPGNQSIGNLEEGPQHVTVLQLKRELKKYQCALAADQVVFTQKELELEELRRQMQLMAQESKGHAVSLKEAQKVNRLQNEKIIEQQLLVDQLSEELAKRSSSMPTSTKESCGDGPDARAPEKRPHTAPFDSHWGHYVYIPSRQDFKKVCSSSPVYSLDQVFAGFRTRSQMLMGHLEDQDEVLHCQFSDNSDDEDSEGQEKPRVRSRSHSWVKKPGSVCSLVEMSDTQAECQRSYLGNGDLKMESLQESQELNLQKLRTSELILNKAKQKMRELTINIRMKEDLIKELIKTGDNAKSVSRQYSLKVTKLEHEAEQAKVELTETRKQLQELEGKDLSDVALKVKLQKEFRKKMDAAKLRVQVLQKKQQDSKKLASLSIQNEKRASELEQNVDHLKYQKVQLQRRLREESEKKKQLDAEVKRDQQKLKELQLNAGQGEGLHPKAEDTDAFNLNRRKGPFRSVDQLQKLDEQRKWLDEEVEKVLSQRQELEMLEEELKKREAIVSKKEALLQEKSHLENKKLRSSQALSTDSLKISARLNLLDQELSEKSLLLENSPTEEKVKISEQVQALQREREQLQRQRNSVDEKLRHGRVLSPKEEHLLFQLEEGIEALEAAIEFKNESIQNRQSSLKSSFQNLSQSESNVLEKLVCLNIAEIRAILFKYFNKVINLREAERKQQLQNKEMKMKVLERDNMVHELESALEYLRLQCDRRLTLQQKEHEQKMQLLLHHFKDQDGEGIIETLNKYEDKIQQLEKDLYFYKKTSRDLKKRLKDPVQGAVQWQRTLTEHHDAGDGVLNPEEAAVLSEELKWASRTENTKLNGREKEVDNSSSSLKTPPLTQQILEDGPDSLPVCGSLAPSSGQLQSSADKTEAHAFTQSQSPPPPQLQPVRSIAQLQGVKPVKVCRRELRQISALELTLRRSSLGAGVRSVTADSLEEPEES.

The Kinesin motor domain occupies Pro-5 to Ile-341. Position 84–91 (Gly-84–Thr-91) interacts with ATP. Coiled coils occupy residues Gln-352–Ala-418 and Gln-493–Lys-554. 2 disordered regions span residues Glu-551–Ala-583 and Phe-642–His-664. Residues Arg-555 to Glu-565 show a composition bias toward polar residues. A compositionally biased stretch (basic and acidic residues) spans Pro-571–Pro-580. Phosphoserine occurs at positions 643, 646, 672, 675, and 704. Positions Leu-709 to Leu-980 form a coiled coil. Position 999 is a phosphoserine (Ser-999). 3 coiled-coil regions span residues Thr-1010–Asn-1078, Asn-1118–Glu-1152, and Gln-1187–Asp-1226. Basic and acidic residues predominate over residues Thr-1267 to Asp-1280. The disordered stretch occupies residues Thr-1267–Gln-1340. Polar residues-rich tracts occupy residues Asn-1281 to Ile-1295 and Ala-1310 to Ala-1320. A phosphoserine mark is found at Ser-1365 and Ser-1387. The interval Ser-1375–Ser-1394 is disordered.

The protein belongs to the TRAFAC class myosin-kinesin ATPase superfamily. Kinesin family. KIF27 subfamily. Interacts with STK36.

Its subcellular location is the cytoplasm. It is found in the cytoskeleton. The protein resides in the cell projection. It localises to the cilium. In terms of biological role, plays an essential role in motile ciliogenesis. The polypeptide is Kinesin-like protein KIF27 (Kif27) (Rattus norvegicus (Rat)).